A 152-amino-acid polypeptide reads, in one-letter code: Cytochrome c-type biogenesis CcmH-like mitochondrial protein (152 aa).

Topologically, residues Met1 to Gln83 are mitochondrial intermembrane. Heme-binding residues include Cys26 and Cys29. The helical transmembrane segment at Thr84 to Tyr104 threads the bilayer. Over Lys105 to Lys152 the chain is Mitochondrial matrix.

Belongs to the CcmH/CycL/Ccl2/NrfF family.

Its subcellular location is the mitochondrion inner membrane. Functionally, plays a role in mitochondrial cytochrome c maturation. Probable component of a heme lyase complex involved in the reduction of apocytochrome c. The protein is Cytochrome c-type biogenesis CcmH-like mitochondrial protein of Oryza sativa subsp. indica (Rice).